Here is a 552-residue protein sequence, read N- to C-terminus: Acyl-CoA synthetase FUM10 (552 aa).

Residue 183 to 194 (ELFTSGTTGAPK) coordinates AMP. The tract at residues 463–536 (EIEHVARLHD…QEIPYNRTGK (74 aa)) is AMP-binding.

The protein belongs to the ATP-dependent AMP-binding enzyme family.

The protein operates within mycotoxin biosynthesis. Acyl-CoA synthetase; part of the gene cluster that mediates the biosynthesis of fumonisins B1 (FB1), B2 (FB2), B3 (FB3), and B4 (FB4), which are carcinogenic mycotoxins. Within the pathway, FUM10 is involved the addition of the tricarballylic moieties to the carbon backbone. FUM10 catalyzes the CoA activation of citrate to form tricarballylic acid. The biosynthesis starts with the FUM1-catalyzed carbon chain assembly from one molecule of acetyl-CoA, eight molecules of malonyl-CoA, and two molecules of methionine (in S-adenosyl form). The C18 polyketide chain is released from the enzyme by a nucleophilic attack of a carbanion, which is derived from R-carbon of alanine by decarboxylation, on the carbonyl carbon of polyketide acyl chain. This step is catalyzed by the pyridoxal 5'-phosphate-dependent aminoacyl transferase FUM8. The resultant 3-keto intermediate is then stereospecifically reduced to a 3-hydroxyl product by reductase FUM13. Subsequent oxidations at C-10 by the cytochrome P450 monooxygenase FUM2, C-14 and C-15 by FUM6, FUM12 or FUM15, tricarballylic esterification of the hydroxyl groups on C-14 and C-15 by acyltransferase FUM14, and C-5 hydroxylation by 2-keto-glutarate-dependent dioxygenase FUM3 furnish the biosynthesis of fumonisins. The tricarballylic moieties are most likely derived from the citric acid cycle, and their addition to the carbon backbone may involve FUM7, FUM10, FUM11 and FUM14. This chain is Acyl-CoA synthetase FUM10, found in Gibberella moniliformis (strain M3125 / FGSC 7600) (Maize ear and stalk rot fungus).